A 282-amino-acid chain; its full sequence is Ubiquinone biosynthesis protein COQ4 homolog, mitochondrial (282 aa).

A mitochondrion-targeting transit peptide spans 1 to 30; that stretch reads MFVRKSCYSLINATRRCLRYRQLSSTTAGT. The Zn(2+) site is built by histidine 186, aspartate 187, histidine 190, and glutamate 202.

It belongs to the COQ4 family. As to quaternary structure, component of a multi-subunit COQ enzyme complex. It depends on Zn(2+) as a cofactor.

The protein resides in the mitochondrion inner membrane. It carries out the reaction a 4-hydroxy-3-methoxy-5-(all-trans-polyprenyl)benzoate + H(+) = a 2-methoxy-6-(all-trans-polyprenyl)phenol + CO2. It functions in the pathway cofactor biosynthesis; ubiquinone biosynthesis. Functionally, lyase that catalyzes the C1-decarboxylation of 4-hydroxy-3-methoxy-5-(all-trans-polyprenyl)benzoic acid into 2-methoxy-6-(all-trans-polyprenyl)phenol during ubiquinone biosynthesis. The sequence is that of Ubiquinone biosynthesis protein COQ4 homolog, mitochondrial from Anopheles gambiae (African malaria mosquito).